The chain runs to 188 residues: Probable DNA-directed RNA polymerase subunit delta (188 aa).

The region spanning 14–81 (LSMIEVAHAL…GNNVWALRSW (68 aa)) is the HTH HARE-type domain. Positions 96–188 (EIEDEEEEEK…EDDSDDTDED (93 aa)) are disordered. Acidic residues-rich tracts occupy residues 118–150 (IEDE…EDKD) and 158–188 (ELAE…TDED).

It belongs to the RpoE family. As to quaternary structure, RNAP is composed of a core of 2 alpha, a beta and a beta' subunits. The core is associated with a delta subunit and one of several sigma factors.

In terms of biological role, participates in both the initiation and recycling phases of transcription. In the presence of the delta subunit, RNAP displays an increased specificity of transcription, a decreased affinity for nucleic acids, and an increased efficiency of RNA synthesis because of enhanced recycling. The polypeptide is Probable DNA-directed RNA polymerase subunit delta (Lactococcus lactis subsp. cremoris (strain MG1363)).